The sequence spans 205 residues: Protein TON_1965 (205 aa).

In terms of domain architecture, AMMECR1 spans 7–201 (EWGEFLVRLA…EEYPKGPVKR (195 aa)).

This is Protein TON_1965 from Thermococcus onnurineus (strain NA1).